A 587-amino-acid polypeptide reads, in one-letter code: Laccase abr2 (587 aa).

Positions 1–17 are cleaved as a signal peptide; the sequence is MWYQSASLLGVAAVAQA. Plastocyanin-like domains lie at 41 to 137 and 168 to 350; these read IFVN…VHIR and LVML…ANDG. Asn71 is a glycosylation site (N-linked (GlcNAc...) asparagine). Cu cation is bound by residues His75, His77, His119, and His121. 4 N-linked (GlcNAc...) asparagine glycosylation sites follow: Asn228, Asn383, Asn420, and Asn462. Residues 397-577 form the Plastocyanin-like 3 domain; that stretch reads PPYPAISPAS…ILMDGVDVWP (181 aa). His487 is a binding site for Cu cation. N-linked (GlcNAc...) asparagine glycosylation is present at Asn504.

This sequence belongs to the multicopper oxidase family.

It is found in the cell surface. The protein operates within pigment biosynthesis; melanin biosynthesis. Laccase; part of the gene cluster that mediates the biosynthesis of dihydroxynaphthalene (DHN)-melanin, a bluish-green pigment and a structural component of the conidial wall. The first step of the pathway is the production of the heptaketide naphtopyrone YWA1 by the polyketide synthase alb1 though condensation of acetyl-CoA with malonyl-CoA. The naphtopyrone YWA1 is then converted to the pentaketide 1,3,6,8-tetrahydroxynaphthalene (1,3,6,8-THN) by the heptaketide hydrolyase ayg1 though chain-length shortening. 1,3,6,8-THN is substrate of the hydroxynaphthalene reductase arp2 to yield scytalone. The scytalone dehydratase arp1 then reduces scytalone to 1,3,8-THN. 1,3,8-THN is also substrate of the hydroxynaphthalene reductase arp2 to yield vermelone. Vermelone is further converted by the multicopper oxidase abr1 to 1,8-DHN. Finally the laccase abr2 transforms 1,8-DHN to DHN-melanin. DHN-melanin biosynthesis appears to be initiated in endosomes where early enzymes (abl1, ayg1, arp1 and arp2) localize, with exocytosis leading to melanin deposition on the cell surface where late enzymes (abr1 and abr2) localize. DHN-melanin is an important structural component of the outer cell wall and is required for the presence of conidial surface hydrophobins. DHN-melanin also plays a crucial role in fungal virulence, including a protective role against the host's immune defenses. DHN-melanin also protects conidia against amoeba predation. The protein is Laccase abr2 of Aspergillus fumigatus (strain ATCC MYA-4609 / CBS 101355 / FGSC A1100 / Af293) (Neosartorya fumigata).